Reading from the N-terminus, the 363-residue chain is NAD(P)H-quinone oxidoreductase subunit 1, chloroplastic (363 aa).

8 helical membrane-spanning segments follow: residues 27-47 (LIPI…IVWL), 93-113 (WLFS…YLVV), 124-144 (LGVG…GLLM), 162-182 (AAQA…VALL), 200-220 (ILGW…IASL), 250-270 (FGLF…FVSV), 303-323 (ATLG…LSIL), and 343-363 (FLLP…LALL).

This sequence belongs to the complex I subunit 1 family. In terms of assembly, NDH is composed of at least 16 different subunits, 5 of which are encoded in the nucleus.

It localises to the plastid. The protein localises to the chloroplast thylakoid membrane. It catalyses the reaction a plastoquinone + NADH + (n+1) H(+)(in) = a plastoquinol + NAD(+) + n H(+)(out). The catalysed reaction is a plastoquinone + NADPH + (n+1) H(+)(in) = a plastoquinol + NADP(+) + n H(+)(out). Its function is as follows. NDH shuttles electrons from NAD(P)H:plastoquinone, via FMN and iron-sulfur (Fe-S) centers, to quinones in the photosynthetic chain and possibly in a chloroplast respiratory chain. The immediate electron acceptor for the enzyme in this species is believed to be plastoquinone. Couples the redox reaction to proton translocation, and thus conserves the redox energy in a proton gradient. This chain is NAD(P)H-quinone oxidoreductase subunit 1, chloroplastic, found in Chaetosphaeridium globosum (Charophycean green alga).